The following is a 127-amino-acid chain: Small ribosomal subunit protein eS8 (127 aa).

It belongs to the eukaryotic ribosomal protein eS8 family. As to quaternary structure, part of the 30S ribosomal subunit.

The chain is Small ribosomal subunit protein eS8 from Nanoarchaeum equitans (strain Kin4-M).